A 384-amino-acid polypeptide reads, in one-letter code: Chaperone protein DnaJ (384 aa).

Positions 5-70 (DFYQVLGVSK…QKRQMYDQYG (66 aa)) constitute a J domain. The CR-type zinc-finger motif lies at 138–216 (GKTVELEIPT…CHGHGRKEET (79 aa)). 8 residues coordinate Zn(2+): Cys-151, Cys-154, Cys-168, Cys-171, Cys-190, Cys-193, Cys-204, and Cys-207. 4 CXXCXGXG motif repeats span residues 151 to 158 (CRDCNGSG), 168 to 175 (CGHCHGSG), 190 to 197 (CPQCRGTG), and 204 to 211 (CRTCHGHG).

Belongs to the DnaJ family. As to quaternary structure, homodimer. Zn(2+) serves as cofactor.

The protein resides in the cytoplasm. Functionally, participates actively in the response to hyperosmotic and heat shock by preventing the aggregation of stress-denatured proteins and by disaggregating proteins, also in an autonomous, DnaK-independent fashion. Unfolded proteins bind initially to DnaJ; upon interaction with the DnaJ-bound protein, DnaK hydrolyzes its bound ATP, resulting in the formation of a stable complex. GrpE releases ADP from DnaK; ATP binding to DnaK triggers the release of the substrate protein, thus completing the reaction cycle. Several rounds of ATP-dependent interactions between DnaJ, DnaK and GrpE are required for fully efficient folding. Also involved, together with DnaK and GrpE, in the DNA replication of plasmids through activation of initiation proteins. The sequence is that of Chaperone protein DnaJ from Idiomarina loihiensis (strain ATCC BAA-735 / DSM 15497 / L2-TR).